The primary structure comprises 230 residues: ATP phosphoribosyltransferase (230 aa).

The protein belongs to the ATP phosphoribosyltransferase family. Short subfamily. Heteromultimer composed of HisG and HisZ subunits.

The protein resides in the cytoplasm. It carries out the reaction 1-(5-phospho-beta-D-ribosyl)-ATP + diphosphate = 5-phospho-alpha-D-ribose 1-diphosphate + ATP. Its pathway is amino-acid biosynthesis; L-histidine biosynthesis; L-histidine from 5-phospho-alpha-D-ribose 1-diphosphate: step 1/9. Catalyzes the condensation of ATP and 5-phosphoribose 1-diphosphate to form N'-(5'-phosphoribosyl)-ATP (PR-ATP). Has a crucial role in the pathway because the rate of histidine biosynthesis seems to be controlled primarily by regulation of HisG enzymatic activity. The sequence is that of ATP phosphoribosyltransferase from Agrobacterium fabrum (strain C58 / ATCC 33970) (Agrobacterium tumefaciens (strain C58)).